The following is a 164-amino-acid chain: Lipoprotein signal peptidase (164 aa).

4 consecutive transmembrane segments (helical) span residues 6–26 (LGILTAVIALALDQATKLWLL), 39–59 (VTSFFDLVLAWNTGISYGWFA), 65–85 (GQILMLAFKAVAIVALAIWMA), and 88–108 (TTKLATIGLGLIIGGAIGNAI). Active-site residues include D118 and D140. Residues 141 to 161 (VAIVVGVVALLYDSLIGAPAV) traverse the membrane as a helical segment.

It belongs to the peptidase A8 family.

It is found in the cell inner membrane. It catalyses the reaction Release of signal peptides from bacterial membrane prolipoproteins. Hydrolyzes -Xaa-Yaa-Zaa-|-(S,diacylglyceryl)Cys-, in which Xaa is hydrophobic (preferably Leu), and Yaa (Ala or Ser) and Zaa (Gly or Ala) have small, neutral side chains.. The protein operates within protein modification; lipoprotein biosynthesis (signal peptide cleavage). This protein specifically catalyzes the removal of signal peptides from prolipoproteins. The sequence is that of Lipoprotein signal peptidase from Rhodopseudomonas palustris (strain TIE-1).